A 655-amino-acid chain; its full sequence is D-xylonate dehydratase YagF (655 aa).

This sequence belongs to the IlvD/Edd family.

The enzyme catalyses D-xylonate = 2-dehydro-3-deoxy-D-arabinonate + H2O. Its function is as follows. Catalyzes the dehydration of D-xylonic acid to form 2-dehydro-3-deoxy-D-pentonate. The protein is D-xylonate dehydratase YagF (yagF) of Escherichia coli (strain K12).